The sequence spans 100 residues: Aspartyl/glutamyl-tRNA(Asn/Gln) amidotransferase subunit C (100 aa).

Belongs to the GatC family. Heterotrimer of A, B and C subunits.

The catalysed reaction is L-glutamyl-tRNA(Gln) + L-glutamine + ATP + H2O = L-glutaminyl-tRNA(Gln) + L-glutamate + ADP + phosphate + H(+). It carries out the reaction L-aspartyl-tRNA(Asn) + L-glutamine + ATP + H2O = L-asparaginyl-tRNA(Asn) + L-glutamate + ADP + phosphate + 2 H(+). Functionally, allows the formation of correctly charged Asn-tRNA(Asn) or Gln-tRNA(Gln) through the transamidation of misacylated Asp-tRNA(Asn) or Glu-tRNA(Gln) in organisms which lack either or both of asparaginyl-tRNA or glutaminyl-tRNA synthetases. The reaction takes place in the presence of glutamine and ATP through an activated phospho-Asp-tRNA(Asn) or phospho-Glu-tRNA(Gln). The polypeptide is Aspartyl/glutamyl-tRNA(Asn/Gln) amidotransferase subunit C (Dictyoglomus thermophilum (strain ATCC 35947 / DSM 3960 / H-6-12)).